A 265-amino-acid polypeptide reads, in one-letter code: MKTQQREQALAIYQQHQGKITNRAIADTIGVSAKTIGIWKKQDKWKEALFSASKNEQKQRPINNDELNERQRLFCLYYVKSFNATQSAIKAGYSPDSAHVTGSRLLKNEKVAAEIRRIKKEMVNEMFIEAMDVLQVYIKIAFADITDYVTFGKKEVQAVGKSGPLFDEDDNPIMKEISFVDVKDSGLVDGTIVTEAKLGKEGIAIKLADKMKALEKLSLYFDLFPDQFKQKIENEKLKLAKQKAEKTDDSQEPIEIMIKRKERKS.

Residues Lys-241–Ser-265 form a disordered region.

It to B.subtilis YqaS and B.subtilis phage SPP1 terminase small subunit. In terms of assembly, dimer of a small and a large subunit.

Functionally, functions as a terminase. The chain is PBSX phage terminase small subunit (xtmA) from Bacillus subtilis (strain 168).